Consider the following 387-residue polypeptide: Phosphoglycerate kinase (387 aa).

Residues 21–23 (DLN), Arg36, 59–62 (HLGR), Arg114, and Arg147 contribute to the substrate site. ATP is bound by residues Lys198, Glu314, and 340-343 (GGDT).

The protein belongs to the phosphoglycerate kinase family. Monomer.

The protein resides in the cytoplasm. The enzyme catalyses (2R)-3-phosphoglycerate + ATP = (2R)-3-phospho-glyceroyl phosphate + ADP. Its pathway is carbohydrate degradation; glycolysis; pyruvate from D-glyceraldehyde 3-phosphate: step 2/5. In Erwinia tasmaniensis (strain DSM 17950 / CFBP 7177 / CIP 109463 / NCPPB 4357 / Et1/99), this protein is Phosphoglycerate kinase.